The following is a 108-amino-acid chain: LBH domain-containing protein 2 (108 aa).

The segment covering 1-11 (MSTPRPAPPQP) has biased composition (pro residues). The disordered stretch occupies residues 1–108 (MSTPRPAPPQ…SEDPAAPARG (108 aa)). Residues 37 to 62 (QRLPSIVVEPSEADPVESGELRWPLE) form the LBH domain. The span at 63 to 85 (SAQRGPSQSRAAAAPSPSLPGEP) shows a compositional bias: low complexity.

The polypeptide is LBH domain-containing protein 2 (Homo sapiens (Human)).